We begin with the raw amino-acid sequence, 193 residues long: 7-methyl-GTP pyrophosphatase (193 aa).

The active-site Proton acceptor is Asp-70.

It belongs to the Maf family. YceF subfamily. A divalent metal cation serves as cofactor.

The protein resides in the cytoplasm. The catalysed reaction is N(7)-methyl-GTP + H2O = N(7)-methyl-GMP + diphosphate + H(+). Functionally, nucleoside triphosphate pyrophosphatase that hydrolyzes 7-methyl-GTP (m(7)GTP). May have a dual role in cell division arrest and in preventing the incorporation of modified nucleotides into cellular nucleic acids. The chain is 7-methyl-GTP pyrophosphatase from Photobacterium profundum (strain SS9).